Here is a 171-residue protein sequence, read N- to C-terminus: Adenine phosphoribosyltransferase (171 aa).

Belongs to the purine/pyrimidine phosphoribosyltransferase family. Homodimer.

It is found in the cytoplasm. The enzyme catalyses AMP + diphosphate = 5-phospho-alpha-D-ribose 1-diphosphate + adenine. The protein operates within purine metabolism; AMP biosynthesis via salvage pathway; AMP from adenine: step 1/1. In terms of biological role, catalyzes a salvage reaction resulting in the formation of AMP, that is energically less costly than de novo synthesis. The sequence is that of Adenine phosphoribosyltransferase from Ruminiclostridium cellulolyticum (strain ATCC 35319 / DSM 5812 / JCM 6584 / H10) (Clostridium cellulolyticum).